Here is a 143-residue protein sequence, read N- to C-terminus: Endoribonuclease YbeY (143 aa).

Residues histidine 109, histidine 113, and histidine 119 each contribute to the Zn(2+) site.

Belongs to the endoribonuclease YbeY family. It depends on Zn(2+) as a cofactor.

The protein resides in the cytoplasm. Single strand-specific metallo-endoribonuclease involved in late-stage 70S ribosome quality control and in maturation of the 3' terminus of the 16S rRNA. The protein is Endoribonuclease YbeY of Neorickettsia sennetsu (strain ATCC VR-367 / Miyayama) (Ehrlichia sennetsu).